Reading from the N-terminus, the 997-residue chain is Bifunctional purine synthesis protein purC/E (997 aa).

Residues 1–305 (MTTAINNNIV…NNNNNNNNNS (305 aa)) form an SAICAR synthetase region. 3 stretches are compositionally biased toward low complexity: residues 294-323 (LNNN…SLPN), 342-355 (QQQS…NVNS), and 524-536 (TSTS…TTTS). Disordered regions lie at residues 294-355 (LNNN…NVNS), 518-538 (IPVD…TSNA), 550-569 (INSN…QQQT), and 575-604 (PTII…SSII). The interval 305–997 (SNNNNNNTSS…GRKMGHVTQQ (693 aa)) is AIR carboxylase. A compositionally biased stretch (low complexity) spans 575–597 (PTIINTPTPVRSSVSRSQSPLPS). ATP is bound by residues R728, K768, Q779, 807 to 810 (EQYI), and E815. One can recognise an ATP-grasp domain in the interval 732–927 (KTFIQSLDIP…QFEQLIRCVC (196 aa)). Mg(2+)-binding residues include E880 and E898. 897 to 898 (NE) provides a ligand contact to ATP.

In the N-terminal section; belongs to the SAICAR synthetase family. It in the C-terminal section; belongs to the AIR carboxylase family. Class I subfamily. Mg(2+) serves as cofactor. It depends on Mn(2+) as a cofactor.

It carries out the reaction 5-amino-1-(5-phospho-D-ribosyl)imidazole-4-carboxylate + L-aspartate + ATP = (2S)-2-[5-amino-1-(5-phospho-beta-D-ribosyl)imidazole-4-carboxamido]succinate + ADP + phosphate + 2 H(+). The catalysed reaction is 5-amino-1-(5-phospho-D-ribosyl)imidazole-4-carboxylate + H(+) = 5-amino-1-(5-phospho-beta-D-ribosyl)imidazole + CO2. It functions in the pathway purine metabolism; IMP biosynthesis via de novo pathway; 5-amino-1-(5-phospho-D-ribosyl)imidazole-4-carboxylate from 5-amino-1-(5-phospho-D-ribosyl)imidazole (carboxylase route): step 1/1. Its pathway is purine metabolism; IMP biosynthesis via de novo pathway; 5-amino-1-(5-phospho-D-ribosyl)imidazole-4-carboxamide from 5-amino-1-(5-phospho-D-ribosyl)imidazole-4-carboxylate: step 1/2. Functionally, bifunctional enzyme involved in de novo IMP synthesis, an essential step for de nove purine synthesis. This chain is Bifunctional purine synthesis protein purC/E (purC/E), found in Dictyostelium discoideum (Social amoeba).